The sequence spans 126 residues: Histone H2B type F-S (126 aa).

A compositionally biased stretch (low complexity) spans 1–12; sequence MPEPAKSAPAPK. The disordered stretch occupies residues 1 to 36; that stretch reads MPEPAKSAPAPKKGSKKAVTKAQKKDGRKRKRSRKE. Proline 2 carries the N-acetylproline modification. Glutamate 3 is modified (ADP-ribosyl glutamic acid). At lysine 6 the chain carries N6-(2-hydroxyisobutyryl)lysine; alternate. Position 6 is an N6-(beta-hydroxybutyryl)lysine; alternate (lysine 6). Lysine 6 carries the post-translational modification N6-acetyllysine; alternate. At lysine 6 the chain carries N6-butyryllysine; alternate. Lysine 6 is subject to N6-crotonyllysine; alternate. Lysine 6 bears the N6-lactoyllysine; alternate mark. Lysine 6 participates in a covalent cross-link: Glycyl lysine isopeptide (Lys-Gly) (interchain with G-Cter in SUMO2); alternate. Residue serine 7 is modified to ADP-ribosylserine. Residue lysine 12 is modified to N6-(beta-hydroxybutyryl)lysine; alternate. Residues lysine 12 and lysine 13 each carry the N6-acetyllysine; alternate modification. N6-crotonyllysine; alternate is present on residues lysine 12 and lysine 13. Lysine 12 is modified (N6-lactoyllysine; alternate). Lysine 13 carries the post-translational modification N6-(2-hydroxyisobutyryl)lysine; alternate. The residue at position 15 (serine 15) is a Phosphoserine; by STK4/MST1. N6-acetyllysine; alternate is present on residues lysine 16, lysine 17, lysine 21, and lysine 24. An N6-crotonyllysine; alternate mark is found at lysine 16, lysine 17, lysine 21, and lysine 24. An N6-lactoyllysine; alternate mark is found at lysine 16, lysine 17, lysine 21, and lysine 24. N6-(beta-hydroxybutyryl)lysine; alternate is present on residues lysine 17 and lysine 21. An N6-glutaryllysine; alternate modification is found at lysine 17. An N6-(2-hydroxyisobutyryl)lysine; alternate mark is found at lysine 21 and lysine 24. Lysine 21 is modified (N6-butyryllysine; alternate). A Glycyl lysine isopeptide (Lys-Gly) (interchain with G-Cter in SUMO2); alternate cross-link involves residue lysine 21. Residue lysine 25 is modified to N6-(2-hydroxyisobutyryl)lysine. Position 35 is an N6-(2-hydroxyisobutyryl)lysine; alternate (lysine 35). Lysine 35 is modified (N6-(beta-hydroxybutyryl)lysine; alternate). Lysine 35 is subject to N6-crotonyllysine; alternate. Lysine 35 carries the N6-glutaryllysine; alternate modification. N6-succinyllysine; alternate is present on lysine 35. Lysine 35 is covalently cross-linked (Glycyl lysine isopeptide (Lys-Gly) (interchain with G-Cter in ubiquitin); alternate). Glutamate 36 is modified (polyADP-ribosyl glutamic acid). Serine 37 carries the phosphoserine; by AMPK modification. Lysine 44, lysine 47, and lysine 58 each carry N6-(2-hydroxyisobutyryl)lysine; alternate. Residue lysine 44 is modified to N6-lactoyllysine; alternate. N6-glutaryllysine; alternate occurs at positions 44 and 47. Residue lysine 47 is modified to N6-methyllysine; alternate. N6,N6-dimethyllysine; alternate is present on lysine 58. Arginine 80 bears the Dimethylated arginine mark. Lysine 86 is subject to N6-(2-hydroxyisobutyryl)lysine; alternate. Position 86 is an N6-(beta-hydroxybutyryl)lysine; alternate (lysine 86). N6-acetyllysine; alternate is present on lysine 86. Position 86 is an N6-lactoyllysine; alternate (lysine 86). The residue at position 86 (lysine 86) is an N6,N6,N6-trimethyllysine; alternate. 2 positions are modified to omega-N-methylarginine: arginine 87 and arginine 93. Lysine 109 carries the post-translational modification N6-(2-hydroxyisobutyryl)lysine; alternate. An N6-lactoyllysine; alternate modification is found at lysine 109. Residue lysine 109 is modified to N6-glutaryllysine; alternate. Lysine 109 is subject to N6-methyllysine; alternate. The O-linked (GlcNAc) serine glycan is linked to serine 113. The residue at position 116 (threonine 116) is a Phosphothreonine. Lysine 117 and lysine 121 each carry N6-(2-hydroxyisobutyryl)lysine; alternate. An N6-(beta-hydroxybutyryl)lysine; alternate mark is found at lysine 117 and lysine 121. An N6-lactoyllysine; alternate mark is found at lysine 117 and lysine 121. Lysine 117 and lysine 121 each carry N6-glutaryllysine; alternate. An N6-succinyllysine; alternate mark is found at lysine 117 and lysine 121. An N6-malonyllysine; alternate modification is found at lysine 117. The residue at position 117 (lysine 117) is an N6-methylated lysine; alternate. Residue lysine 121 forms a Glycyl lysine isopeptide (Lys-Gly) (interchain with G-Cter in ubiquitin); alternate linkage.

Belongs to the histone H2B family. The nucleosome is a histone octamer containing two molecules each of H2A, H2B, H3 and H4 assembled in one H3-H4 heterotetramer and two H2A-H2B heterodimers. The octamer wraps approximately 147 bp of DNA. Post-translationally, monoubiquitination at Lys-35 (H2BK34Ub) by the MSL1/MSL2 dimer is required for histone H3 'Lys-4' (H3K4me) and 'Lys-79' (H3K79me) methylation and transcription activation at specific gene loci, such as HOXA9 and MEIS1 loci. Similarly, monoubiquitination at Lys-121 (H2BK120Ub) by the RNF20/40 complex gives a specific tag for epigenetic transcriptional activation and is also prerequisite for histone H3 'Lys-4' and 'Lys-79' methylation. It also functions cooperatively with the FACT dimer to stimulate elongation by RNA polymerase II. H2BK120Ub also acts as a regulator of mRNA splicing: deubiquitination by USP49 is required for efficient cotranscriptional splicing of a large set of exons. In terms of processing, phosphorylation at Ser-37 (H2BS36ph) by AMPK in response to stress promotes transcription. Phosphorylated on Ser-15 (H2BS14ph) by STK4/MST1 during apoptosis; which facilitates apoptotic chromatin condensation. Also phosphorylated on Ser-15 in response to DNA double strand breaks (DSBs), and in correlation with somatic hypermutation and immunoglobulin class-switch recombination. GlcNAcylation at Ser-113 promotes monoubiquitination of Lys-121. It fluctuates in response to extracellular glucose, and associates with transcribed genes. Post-translationally, ADP-ribosylated by PARP1 or PARP2 on Ser-7 (H2BS6ADPr) in response to DNA damage. H2BS6ADPr promotes recruitment of CHD1L. Mono-ADP-ribosylated on Glu-3 (H2BE2ADPr) by PARP3 in response to single-strand breaks. Poly ADP-ribosylation on Glu-36 (H2BE35ADPr) by PARP1 regulates adipogenesis: it inhibits phosphorylation at Ser-37 (H2BS36ph), thereby blocking expression of pro-adipogenetic genes. In terms of processing, crotonylation (Kcr) is specifically present in male germ cells and marks testis-specific genes in post-meiotic cells, including X-linked genes that escape sex chromosome inactivation in haploid cells. Crotonylation marks active promoters and enhancers and confers resistance to transcriptional repressors. It is also associated with post-meiotically activated genes on autosomes. Lactylated in macrophages by EP300/P300 by using lactoyl-CoA directly derived from endogenous or exogenous lactate, leading to stimulates gene transcription.

The protein localises to the nucleus. It is found in the chromosome. Functionally, core component of nucleosome. Nucleosomes wrap and compact DNA into chromatin, limiting DNA accessibility to the cellular machineries which require DNA as a template. Histones thereby play a central role in transcription regulation, DNA repair, DNA replication and chromosomal stability. DNA accessibility is regulated via a complex set of post-translational modifications of histones, also called histone code, and nucleosome remodeling. Its function is as follows. Has broad antibacterial activity. May contribute to the formation of the functional antimicrobial barrier of the colonic epithelium, and to the bactericidal activity of amniotic fluid. The polypeptide is Histone H2B type F-S (Homo sapiens (Human)).